A 181-amino-acid chain; its full sequence is Epidermin decarboxylase (181 aa).

His-67 is an active-site residue.

The protein belongs to the HFCD (homooligomeric flavin containing Cys decarboxylase) superfamily. In terms of assembly, homododecamer. FMN serves as cofactor.

Its function is as follows. Catalyzes the removal of two reducing equivalents (oxidative decarboxylation) from the cysteine residue of the C-terminal meso-lanthionine of epidermin to form a --C==C-- double bond. The chain is Epidermin decarboxylase (epiD) from Staphylococcus epidermidis.